We begin with the raw amino-acid sequence, 125 residues long: Small ribosomal subunit protein uS13 (125 aa).

Positions G95 to K125 are disordered. Over residues T105 to K125 the composition is skewed to basic residues.

The protein belongs to the universal ribosomal protein uS13 family. Part of the 30S ribosomal subunit. Forms a loose heterodimer with protein S19. Forms two bridges to the 50S subunit in the 70S ribosome.

Functionally, located at the top of the head of the 30S subunit, it contacts several helices of the 16S rRNA. In the 70S ribosome it contacts the 23S rRNA (bridge B1a) and protein L5 of the 50S subunit (bridge B1b), connecting the 2 subunits; these bridges are implicated in subunit movement. Contacts the tRNAs in the A and P-sites. The chain is Small ribosomal subunit protein uS13 from Leptospira biflexa serovar Patoc (strain Patoc 1 / Ames).